Consider the following 716-residue polypeptide: Tensin-4 (716 aa).

Positions 1 to 17 (MSQVMSSPLLAGGPAVG) are cleaved as a signal peptide. Disordered regions lie at residues 119–274 (LPPG…VSML), 301–322 (QSSS…NLGP), 334–366 (VPSN…PSIT), and 379–436 (GFPE…RDMQ). Over residues 138-150 (KKKEEPEALDIKY) the composition is skewed to basic and acidic residues. The segment covering 197-206 (SSESLIFSGS) has biased composition (polar residues). The segment covering 214-228 (PAPPSAVPSSHPPTS) has biased composition (pro residues). Ser-248 carries the post-translational modification Phosphoserine. The span at 265–274 (PQLSSRVSML) shows a compositional bias: polar residues. Over residues 402 to 419 (ATSSSMPCPATRSHSQTL) the composition is skewed to polar residues. Residues 449–556 (WFKPSISREQ…ALPCKLVIPQ (108 aa)) form the SH2 domain. One can recognise a PTB domain in the interval 583–704 (CHALYLSSVS…TLQPASQVIR (122 aa)).

It belongs to the PTEN phosphatase protein family. In terms of assembly, interacts (via SH2 domain) with Rho GTPase-activating protein DLC1 (via C-terminus); the interaction is independent of DLC1 tyrosine phosphorylation. Interacts with integrin ITGB1; the interaction displaces tensin TNS3 from the ITGB1 cytoplasmic tail and promotes ITGB1 stability. Interacts (via SH2 domain) with E3 ubiquitin-protein ligase CBL (phosphorylated on 'Tyr-782'); the interaction is enhanced in the presence of EGF and reduces interaction of CBL with EGFR. Interacts (via SH2 domain) with receptor tyrosine kinase MET (when phosphorylated); the interaction increases MET protein stability.

The protein localises to the cell junction. It is found in the focal adhesion. Its subcellular location is the cytoplasm. It localises to the cytoskeleton. Functionally, promotes EGF-induced cell migration by displacing tensin TNS3 from the cytoplasmic tail of integrin ITGB1 which results in dissociation of TNS3 from focal adhesions, disassembly of actin stress fibers and initiation of cell migration. Suppresses ligand-induced degradation of EGFR by reducing EGFR ubiquitination in the presence of EGF. Increases MET protein stability by inhibiting MET endocytosis and subsequent lysosomal degradation which leads to increased cell survival, proliferation and migration. This chain is Tensin-4 (TNS4), found in Bos taurus (Bovine).